The sequence spans 336 residues: Nucleoid-associated protein Spro_3255 (336 aa).

Belongs to the YejK family.

The protein localises to the cytoplasm. Its subcellular location is the nucleoid. In Serratia proteamaculans (strain 568), this protein is Nucleoid-associated protein Spro_3255.